Here is a 216-residue protein sequence, read N- to C-terminus: Putative transmembrane protein RNF32-DT (216 aa).

Residues Trp-177 to Val-197 traverse the membrane as a helical segment.

In terms of tissue distribution, expressed only in testis.

It localises to the cytoplasm. It is found in the membrane. The sequence is that of Putative transmembrane protein RNF32-DT from Homo sapiens (Human).